We begin with the raw amino-acid sequence, 270 residues long: Ribonuclease HII (270 aa).

Residues 28–222 (RQVAGADEAG…VSGRQGAPPR (195 aa)) enclose the RNase H type-2 domain. A divalent metal cation is bound by residues D34, E35, and D128.

This sequence belongs to the RNase HII family. Mn(2+) is required as a cofactor. Requires Mg(2+) as cofactor.

It localises to the cytoplasm. The enzyme catalyses Endonucleolytic cleavage to 5'-phosphomonoester.. Its function is as follows. Endonuclease that specifically degrades the RNA of RNA-DNA hybrids. This is Ribonuclease HII from Salinispora tropica (strain ATCC BAA-916 / DSM 44818 / JCM 13857 / NBRC 105044 / CNB-440).